Consider the following 423-residue polypeptide: Serine/threonine-protein kinase ppk25 (423 aa).

A phosphoserine mark is found at Ser36 and Ser38. The Protein kinase domain maps to 53 to 305 (WIIKKTIGAG…LEQAAKFPWL (253 aa)). Residues 59–67 (IGAGSMGKV) and Lys82 each bind ATP. Asp175 functions as the Proton acceptor in the catalytic mechanism.

Belongs to the protein kinase superfamily. Ser/Thr protein kinase family.

The protein localises to the cytoplasm. The enzyme catalyses L-seryl-[protein] + ATP = O-phospho-L-seryl-[protein] + ADP + H(+). It carries out the reaction L-threonyl-[protein] + ATP = O-phospho-L-threonyl-[protein] + ADP + H(+). This chain is Serine/threonine-protein kinase ppk25 (ppk25), found in Schizosaccharomyces pombe (strain 972 / ATCC 24843) (Fission yeast).